Consider the following 460-residue polypeptide: Chromosomal replication initiator protein DnaA (460 aa).

The segment at 1 to 83 (MENIWLEAQT…EFHVADEKPE (83 aa)) is domain I, interacts with DnaA modulators. Basic and acidic residues predominate over residues 78 to 121 (ADEKPEAAPEEKPEKEGKPAREKEKDKDKEKEKDREKEKDKKEL). The tract at residues 78 to 122 (ADEKPEAAPEEKPEKEGKPAREKEKDKDKEKEKDREKEKDKKELV) is disordered. Positions 83 to 123 (EAAPEEKPEKEGKPAREKEKDKDKEKEKDREKEKDKKELVP) are domain II. A domain III, AAA+ region region spans residues 124–340 (NLNPKYTFES…GMLIRLEAFA (217 aa)). Gly-168, Gly-170, Lys-171, and Thr-172 together coordinate ATP. The tract at residues 341-460 (SLTGQEITLS…VEDIRKKLFT (120 aa)) is domain IV, binds dsDNA.

The protein belongs to the DnaA family. As to quaternary structure, oligomerizes as a right-handed, spiral filament on DNA at oriC.

Its subcellular location is the cytoplasm. In terms of biological role, plays an essential role in the initiation and regulation of chromosomal replication. ATP-DnaA binds to the origin of replication (oriC) to initiate formation of the DNA replication initiation complex once per cell cycle. Binds the DnaA box (a 9 base pair repeat at the origin) and separates the double-stranded (ds)DNA. Forms a right-handed helical filament on oriC DNA; dsDNA binds to the exterior of the filament while single-stranded (ss)DNA is stabiized in the filament's interior. The ATP-DnaA-oriC complex binds and stabilizes one strand of the AT-rich DNA unwinding element (DUE), permitting loading of DNA polymerase. After initiation quickly degrades to an ADP-DnaA complex that is not apt for DNA replication. Binds acidic phospholipids. This is Chromosomal replication initiator protein DnaA from Geobacter sp. (strain M21).